The following is a 327-amino-acid chain: Glycerol-3-phosphate dehydrogenase [NAD(P)+] (327 aa).

4 residues coordinate NADPH: S10, F11, R31, and K108. Sn-glycerol 3-phosphate is bound by residues K108, G136, and S138. A140 provides a ligand contact to NADPH. Sn-glycerol 3-phosphate-binding residues include K191, D246, S256, R257, and N258. K191 acts as the Proton acceptor in catalysis. Residue R257 participates in NADPH binding. NADPH-binding residues include L281 and E283.

This sequence belongs to the NAD-dependent glycerol-3-phosphate dehydrogenase family.

Its subcellular location is the cytoplasm. It catalyses the reaction sn-glycerol 3-phosphate + NAD(+) = dihydroxyacetone phosphate + NADH + H(+). The catalysed reaction is sn-glycerol 3-phosphate + NADP(+) = dihydroxyacetone phosphate + NADPH + H(+). The protein operates within membrane lipid metabolism; glycerophospholipid metabolism. Its function is as follows. Catalyzes the reduction of the glycolytic intermediate dihydroxyacetone phosphate (DHAP) to sn-glycerol 3-phosphate (G3P), the key precursor for phospholipid synthesis. This is Glycerol-3-phosphate dehydrogenase [NAD(P)+] from Ehrlichia ruminantium (strain Gardel).